Here is a 282-residue protein sequence, read N- to C-terminus: Shikimate dehydrogenase (NADP(+)) (282 aa).

Shikimate is bound by residues 15-17 and T62; that span reads SKS. The active-site Proton acceptor is the K66. N87 and D103 together coordinate shikimate. NADP(+) is bound by residues 127–131, 151–156, and M220; these read GAGGA and NRTHTK. Y222 provides a ligand contact to shikimate. G244 serves as a coordination point for NADP(+).

It belongs to the shikimate dehydrogenase family. Homodimer.

The catalysed reaction is shikimate + NADP(+) = 3-dehydroshikimate + NADPH + H(+). It participates in metabolic intermediate biosynthesis; chorismate biosynthesis; chorismate from D-erythrose 4-phosphate and phosphoenolpyruvate: step 4/7. Involved in the biosynthesis of the chorismate, which leads to the biosynthesis of aromatic amino acids. Catalyzes the reversible NADPH linked reduction of 3-dehydroshikimate (DHSA) to yield shikimate (SA). The protein is Shikimate dehydrogenase (NADP(+)) of Shewanella putrefaciens (strain CN-32 / ATCC BAA-453).